A 169-amino-acid chain; its full sequence is Glycine-rich RNA-binding protein 8 (169 aa).

Positions 6–84 constitute an RRM domain; the sequence is YRCFVGGLAW…RVITVNEAQS (79 aa). Residue R47 is modified to ADP-ribosylarginine; by HopU1. Residues 80 to 99 are disordered; that stretch reads NEAQSRGSGGGGGGRGGSGG. A compositionally biased stretch (gly residues) spans 86 to 99; it reads GSGGGGGGRGGSGG. Positions 86 to 168 are glycine-rich (GR) required for cell-to-cell movement; that stretch reads GSGGGGGGRG…GGSYGGGGGG (83 aa). The nuclear targeting sequence (M9) stretch occupies residues 95-143; that stretch reads GGSGGGYRSGGGGGYSGGGGGGYSGGGGGGYERRSGGYGSGGGGGGRGY. Phosphoserine is present on S103. Positions 130 to 169 are disordered; it reads GGYGSGGGGGGRGYGGGGRREGGGYGGGDGGSYGGGGGGW.

It belongs to the GR-RBP family. Interacts with TRN1. Binds to small phloem-mobile single-stranded RNAs (ss-sRNA, e.g. small interfering RNA (siRNA) and microRNA (miRNA)) in the phloeme exudate, including viral-derived sRNA (vsiRNA). In terms of processing, ADP-ribosylated by the Pseudomonas syringae type III effector HopU1. ADP-ribosylation reduces the ability of the protein to bind RNA. In terms of tissue distribution, ubiquitous.

The protein resides in the cytoplasm. Its subcellular location is the nucleus. It is found in the secreted. Plays a role in RNA transcription or processing during stress. Binds RNAs and DNAs sequence with a preference to single-stranded nucleic acids. Involved in mRNA alternative splicing of numerous targets by modulating splice site selection. Negatively regulates the circadian oscillations of its own transcript as well as RBG7 transcript. Forms an interlocked post-transcriptional negative feedback loop with the RBG7 autoregulatory circuit. Both proteins negatively autoregulate and reciprocally crossregulate by binding to their pre-mRNAs and promoting unproductive splicing coupled to degradation via the NMD pathway. Target of the Pseudomonas syringae type III effector HopU1. Mediates cell-to-cell trafficking of RNA interference (RNAi) signals (small RNAs (sRNA), e.g. small interfering RNA (siRNA) and microRNA (miRNA)) which regulate growth and development, as well as responses to environmental inputs, including pathogen attack; can compromise zucchini yellow mosaic virus (ZYMV) and tobacco rattle virus (TRV) infections at the early stage. This is Glycine-rich RNA-binding protein 8 from Arabidopsis thaliana (Mouse-ear cress).